A 491-amino-acid polypeptide reads, in one-letter code: MNTQQLAKLRSIVPEMRRVRHIHFVGIGGAGMGGIAEVLANEGYQISGSDLAPNPVTQQLTSLGATIFFNHRPENVRDASVVVVSSAISADNPEIVAAHEARIPVIRRAEMLAELMRFRHGIAIAGTHGKTTTTAMVSSIYAEAGLDPTFVNGGLVKAAGVHARLGHSRYLIAEADESDASFLHLQPMVAIVTNIEADHMDTYHGDFENLKQTFINFLHNLPFYGRAVMCVDDPVIRELLPRVGRQTTTYGFSEDADVRVEDYQQIGSQGHFTLLRQGMPDLHVTLNAPGRHNALNAAAAVAVATEEGIDDDAILRALESFQGTGRRFDFLGEFPLEPVNGKAGTAMLVDDYGHHPTEVDATIKAARAGWPDKKLVMLFQPHRYTRTRDLYDDFANVLTQVDALLMLDVYPAGEAPIPGADSRSLCRTIRNRGKIDPILVSDPAQVATMLAPVLTGNDLILVQGAGNVGKIARYLSEIKLKPQIQEEEQHG.

126–132 (GTHGKTT) is an ATP binding site.

It belongs to the MurCDEF family.

The protein localises to the cytoplasm. It catalyses the reaction UDP-N-acetyl-alpha-D-muramate + L-alanine + ATP = UDP-N-acetyl-alpha-D-muramoyl-L-alanine + ADP + phosphate + H(+). The protein operates within cell wall biogenesis; peptidoglycan biosynthesis. In terms of biological role, cell wall formation. The sequence is that of UDP-N-acetylmuramate--L-alanine ligase from Salmonella choleraesuis (strain SC-B67).